The sequence spans 227 residues: Thymidylate kinase (227 aa).

ATP is bound at residue 16–23; it reads GIDGAGKT.

The protein belongs to the thymidylate kinase family.

The catalysed reaction is dTMP + ATP = dTDP + ADP. Its function is as follows. Phosphorylation of dTMP to form dTDP in both de novo and salvage pathways of dTTP synthesis. The protein is Thymidylate kinase of Xanthomonas oryzae pv. oryzae (strain MAFF 311018).